A 457-amino-acid polypeptide reads, in one-letter code: Cysteine--tRNA ligase (457 aa).

Cysteine 27 lines the Zn(2+) pocket. The 'HIGH' region signature appears at 29-39; the sequence is PTVYDFAHIGN. Residues cysteine 211, histidine 236, and glutamate 240 each contribute to the Zn(2+) site. A 'KMSKS' region motif is present at residues 269–273; that stretch reads KMSKS. Lysine 272 serves as a coordination point for ATP.

It belongs to the class-I aminoacyl-tRNA synthetase family. In terms of assembly, monomer. Zn(2+) is required as a cofactor.

The protein localises to the cytoplasm. It carries out the reaction tRNA(Cys) + L-cysteine + ATP = L-cysteinyl-tRNA(Cys) + AMP + diphosphate. The protein is Cysteine--tRNA ligase of Ehrlichia ruminantium (strain Gardel).